The primary structure comprises 271 residues: Bis(5'-nucleosyl)-tetraphosphatase, symmetrical (271 aa).

The protein belongs to the Ap4A hydrolase family.

The enzyme catalyses P(1),P(4)-bis(5'-adenosyl) tetraphosphate + H2O = 2 ADP + 2 H(+). Functionally, hydrolyzes diadenosine 5',5'''-P1,P4-tetraphosphate to yield ADP. This Aliivibrio fischeri (strain MJ11) (Vibrio fischeri) protein is Bis(5'-nucleosyl)-tetraphosphatase, symmetrical.